Consider the following 249-residue polypeptide: 2,3,4,5-tetrahydropyridine-2,6-dicarboxylate N-acetyltransferase (249 aa).

This sequence belongs to the transferase hexapeptide repeat family. DapH subfamily.

It carries out the reaction (S)-2,3,4,5-tetrahydrodipicolinate + acetyl-CoA + H2O = L-2-acetamido-6-oxoheptanedioate + CoA. The protein operates within amino-acid biosynthesis; L-lysine biosynthesis via DAP pathway; LL-2,6-diaminopimelate from (S)-tetrahydrodipicolinate (acetylase route): step 1/3. Functionally, catalyzes the transfer of an acetyl group from acetyl-CoA to tetrahydrodipicolinate. This is 2,3,4,5-tetrahydropyridine-2,6-dicarboxylate N-acetyltransferase from Fervidobacterium nodosum (strain ATCC 35602 / DSM 5306 / Rt17-B1).